The following is a 104-amino-acid chain: Inner membrane protein YjcH (104 aa).

Topologically, residues methionine 1–arginine 24 are cytoplasmic. A helical transmembrane segment spans residues phenylalanine 25–alanine 47. Residues proline 48–valine 61 lie on the Periplasmic side of the membrane. Residues threonine 62–tryptophan 84 traverse the membrane as a helical segment. The Cytoplasmic segment spans residues arginine 85–serine 104.

The protein resides in the cell inner membrane. This Escherichia coli (strain K12) protein is Inner membrane protein YjcH (yjcH).